We begin with the raw amino-acid sequence, 1023 residues long: Sodium/potassium-transporting ATPase subunit alpha-1 (1023 aa).

Positions 1-5 (MGKGV) are excised as a propeptide. Positions 1–11 (MGKGVGRDKYE) are enriched in basic and acidic residues. The tract at residues 1-39 (MGKGVGRDKYEPAAVSEQGDKKGKKGKKDRDMDELKKEV) is disordered. The Cytoplasmic segment spans residues 6-87 (GRDKYEPAAV…NALTPPPTTP (82 aa)). Lys-9 carries the post-translational modification N6-acetyllysine. Position 10 is a phosphotyrosine (Tyr-10). Ser-16 is subject to Phosphoserine. Lys-21 carries the post-translational modification N6-acetyllysine. The segment covering 28-39 (KDRDMDELKKEV) has biased composition (basic and acidic residues). Phosphoserine occurs at positions 40 and 47. Residues 82–84 (PPP) form a phosphoinositide-3 kinase binding region. The helical transmembrane segment at 88–108 (EWIKFCRQLFGGFSMLLWIGA) threads the bilayer. Residues 109–131 (ILCFLAYSIQAATEEEPQNDNLY) lie on the Extracellular side of the membrane. A helical membrane pass occupies residues 132-152 (LGVVLSAVVIITGCFSYYQEA). Topologically, residues 153 to 288 (KSSKIMESFK…GGQTPIAAEI (136 aa)) are cytoplasmic. Positions 216-235 (SSLTGESEPQTRSPDFTNEN) are disordered. At Ser-228 the chain carries Phosphoserine. Tyr-260 is subject to Phosphotyrosine. The helical transmembrane segment at 289–308 (EHFIHIITGVAVFLGVSFFI) threads the bilayer. Topologically, residues 309–320 (LSLILEYTWLEA) are extracellular. A helical transmembrane segment spans residues 321-338 (VIFLIGIIVANVPEGLLA). The Cytoplasmic segment spans residues 339–772 (TVTVCLTLTA…EEGRLIFDNL (434 aa)). Asp-376 serves as the catalytic 4-aspartylphosphate intermediate. Residues Ser-452 and Ser-484 each carry the phosphoserine modification. ATP is bound at residue Lys-487. Tyr-542 carries the phosphotyrosine modification. A mediates interaction with SCN7A region spans residues 596 to 717 (RAAVPDAVGK…QGAIVAVTGD (122 aa)). Position 661 is an N6-succinyllysine (Lys-661). Ser-668 and Ser-675 each carry phosphoserine. Asp-717 and Asp-721 together coordinate Mg(2+). The chain crosses the membrane as a helical span at residues 773 to 792 (KKSIAYTLTSNIPEITPFLI). Topologically, residues 793-802 (FIIANIPLPL) are extracellular. A helical membrane pass occupies residues 803–823 (GTVTILCIDLGTDMVPAISLA). Residues 824-843 (YEQAESDIMKRQPRNPKTDK) are Cytoplasmic-facing. The chain crosses the membrane as a helical span at residues 844 to 866 (LVNERLISMAYGQIGMIQALGGF). Topologically, residues 867–918 (FTYFVILAENGFLPIHLLGLRVDWDDRWINDVEDSYGQQWTYEQRKIVEFTC) are extracellular. A helical transmembrane segment spans residues 919–938 (HTAFFVSIVVVQWADLVICK). At 939 to 951 (TRRNSVFQQGMKN) the chain is on the cytoplasmic side. Ser-943 is modified (phosphoserine; by PKA). Residues 952–970 (KILIFGLFEETALAAFLSY) traverse the membrane as a helical segment. Topologically, residues 971–985 (CPGMGVALRMYPLKP) are extracellular. Residues 986–1006 (TWWFCAFPYSLLIFVYDEVRK) form a helical membrane-spanning segment. Residues 1007 to 1023 (LIIRRRPGGWVEKETYY) are Cytoplasmic-facing.

It belongs to the cation transport ATPase (P-type) (TC 3.A.3) family. Type IIC subfamily. As to quaternary structure, the sodium/potassium-transporting ATPase is composed of a catalytic alpha subunit, an auxiliary non-catalytic beta subunit and an additional regulatory subunit. Interacts with regulatory subunit FXYD1. Interacts with regulatory subunit FXYD3. Interacts with SIK1. Binds the HLA class II histocompatibility antigen DR1. Interacts with SLC35G1 and STIM1. Interacts with CLN3; this interaction regulates the sodium/potassium-transporting ATPase complex localization at the plasma membrane. Interacts with SCN7A; activates ATP1A1 P-type sodium:potassium-exchanging transporter activity which indirectly signals to nearby neurons to regulate sodium homeostasis. Phosphorylation on Tyr-10 modulates pumping activity. Phosphorylation of Ser-943 by PKA modulates the response of ATP1A1 to PKC. Dephosphorylation by protein phosphatase 2A (PP2A) following increases in intracellular sodium, leading to increase catalytic activity.

Its subcellular location is the cell membrane. The protein resides in the basolateral cell membrane. It is found in the sarcolemma. It localises to the cell projection. The protein localises to the axon. Its subcellular location is the melanosome. It catalyses the reaction K(+)(out) + Na(+)(in) + ATP + H2O = K(+)(in) + Na(+)(out) + ADP + phosphate + H(+). This is the catalytic component of the active enzyme, which catalyzes the hydrolysis of ATP coupled with the exchange of sodium and potassium ions across the plasma membrane. This action creates the electrochemical gradient of sodium and potassium ions, providing the energy for active transport of various nutrients. Could also be part of an osmosensory signaling pathway that senses body-fluid sodium levels and controls salt intake behavior as well as voluntary water intake to regulate sodium homeostasis. This chain is Sodium/potassium-transporting ATPase subunit alpha-1 (ATP1A1), found in Homo sapiens (Human).